The sequence spans 730 residues: Cyclin-dependent kinase 12 (730 aa).

2 disordered regions span residues 1–230 (MEIS…APFS) and 246–283 (FSLSSIPPPPPQTDGGASSSKRQDPLPMPPDSKRIATR). A compositionally biased stretch (basic and acidic residues) spans 9-21 (THERDRKGSYGHR). Residues 57–67 (SISPQYKQRNW) are compositionally biased toward polar residues. The segment covering 75-94 (GRDRGRNDFSYRKKGKDYNK) has biased composition (basic and acidic residues). Basic residues-rich tracts occupy residues 95 to 122 (RRDKRSRSRSRHRSPKRSGSSKKSKRRN) and 151 to 163 (KSKKKSRKRRKHS). Over residues 194 to 203 (FNINPFQPMF) the composition is skewed to low complexity. Residues 204–230 (SQPPPPPLPPNSQFMTPPPRPPPAPFS) are compositionally biased toward pro residues. The region spanning 313–605 (MLDQIGEGTY…AKEALNHPWI (293 aa)) is the Protein kinase domain. ATP is bound by residues 317-325 (IGEGTYGQV), Lys-340, and 398-403 (EYVDHD). The Proton acceptor role is filled by Asp-444. The interval 623–730 (DCHEMWSKKQ…QSQYQSVFFK (108 aa)) is disordered. His-625 is a binding site for ATP. Positions 676 to 688 (NHHHHHHHSHHHA) are enriched in basic residues. The segment covering 714 to 730 (NNHQPVPQSQYQSVFFK) has biased composition (polar residues).

This sequence belongs to the protein kinase superfamily. CMGC Ser/Thr protein kinase family. CDC2/CDKX subfamily.

Its subcellular location is the nucleus. The enzyme catalyses [DNA-directed RNA polymerase] + ATP = phospho-[DNA-directed RNA polymerase] + ADP + H(+). It carries out the reaction L-seryl-[protein] + ATP = O-phospho-L-seryl-[protein] + ADP + H(+). The catalysed reaction is L-threonyl-[protein] + ATP = O-phospho-L-threonyl-[protein] + ADP + H(+). In terms of biological role, cyclin-dependent kinase which displays CTD kinase activity: hyperphosphorylates 'Ser-2' in the C-terminal heptapeptide repeat domain (CTD) of the largest RNA polymerase II subunit, thereby acting as a key regulator of transcription elongation. Required for normal reproduction. The protein is Cyclin-dependent kinase 12 of Caenorhabditis elegans.